Consider the following 207-residue polypeptide: ATP-dependent Clp protease proteolytic subunit (207 aa).

Ser111 functions as the Nucleophile in the catalytic mechanism. His136 is a catalytic residue.

Belongs to the peptidase S14 family. In terms of assembly, fourteen ClpP subunits assemble into 2 heptameric rings which stack back to back to give a disk-like structure with a central cavity, resembling the structure of eukaryotic proteasomes.

The protein resides in the cytoplasm. The enzyme catalyses Hydrolysis of proteins to small peptides in the presence of ATP and magnesium. alpha-casein is the usual test substrate. In the absence of ATP, only oligopeptides shorter than five residues are hydrolyzed (such as succinyl-Leu-Tyr-|-NHMec, and Leu-Tyr-Leu-|-Tyr-Trp, in which cleavage of the -Tyr-|-Leu- and -Tyr-|-Trp bonds also occurs).. Its function is as follows. Cleaves peptides in various proteins in a process that requires ATP hydrolysis. Has a chymotrypsin-like activity. Plays a major role in the degradation of misfolded proteins. In Burkholderia mallei (strain ATCC 23344), this protein is ATP-dependent Clp protease proteolytic subunit.